Consider the following 340-residue polypeptide: 4-hydroxy-2-oxovalerate aldolase (340 aa).

Residues 8–260 (VILHDMSLRD…HHGVNLYDIM (253 aa)) form the Pyruvate carboxyltransferase domain. Substrate is bound at residue 16-17 (RD). Asp17 is a binding site for Mn(2+). Catalysis depends on His20, which acts as the Proton acceptor. Substrate is bound by residues Ser170 and His199. His199 and His201 together coordinate Mn(2+). Residue Tyr290 participates in substrate binding.

Belongs to the 4-hydroxy-2-oxovalerate aldolase family.

The catalysed reaction is (S)-4-hydroxy-2-oxopentanoate = acetaldehyde + pyruvate. In Shewanella halifaxensis (strain HAW-EB4), this protein is 4-hydroxy-2-oxovalerate aldolase.